The chain runs to 257 residues: tRNA pseudouridine synthase A (257 aa).

The Nucleophile role is filled by Asp-43. Tyr-94 serves as a coordination point for substrate.

It belongs to the tRNA pseudouridine synthase TruA family.

The enzyme catalyses uridine(38/39/40) in tRNA = pseudouridine(38/39/40) in tRNA. In terms of biological role, formation of pseudouridine at positions 38, 39 and 40 in the anticodon stem and loop of transfer RNAs. In Pyrobaculum calidifontis (strain DSM 21063 / JCM 11548 / VA1), this protein is tRNA pseudouridine synthase A.